The primary structure comprises 616 residues: Chaperone protein HscA homolog (616 aa).

Belongs to the heat shock protein 70 family.

Its function is as follows. Chaperone involved in the maturation of iron-sulfur cluster-containing proteins. Has a low intrinsic ATPase activity which is markedly stimulated by HscB. This is Chaperone protein HscA homolog from Aliivibrio fischeri (strain MJ11) (Vibrio fischeri).